The chain runs to 61 residues: Large ribosomal subunit protein uL30 (61 aa).

The protein belongs to the universal ribosomal protein uL30 family. In terms of assembly, part of the 50S ribosomal subunit.

The protein is Large ribosomal subunit protein uL30 of Shewanella piezotolerans (strain WP3 / JCM 13877).